Here is a 131-residue protein sequence, read N- to C-terminus: Large ribosomal subunit protein bL17 (131 aa).

Belongs to the bacterial ribosomal protein bL17 family. Part of the 50S ribosomal subunit. Contacts protein L32.

This is Large ribosomal subunit protein bL17 from Cupriavidus metallidurans (strain ATCC 43123 / DSM 2839 / NBRC 102507 / CH34) (Ralstonia metallidurans).